Here is a 333-residue protein sequence, read N- to C-terminus: Adenosine deaminase (333 aa).

Residues H12 and H14 each coordinate Zn(2+). Residues H14, D16, and G170 each contribute to the substrate site. Residue H197 coordinates Zn(2+). Catalysis depends on E200, which acts as the Proton donor. D278 provides a ligand contact to Zn(2+). D279 serves as a coordination point for substrate.

It belongs to the metallo-dependent hydrolases superfamily. Adenosine and AMP deaminases family. Adenosine deaminase subfamily. Zn(2+) serves as cofactor.

The enzyme catalyses adenosine + H2O + H(+) = inosine + NH4(+). It carries out the reaction 2'-deoxyadenosine + H2O + H(+) = 2'-deoxyinosine + NH4(+). Catalyzes the hydrolytic deamination of adenosine and 2-deoxyadenosine. The chain is Adenosine deaminase from Shigella sonnei (strain Ss046).